We begin with the raw amino-acid sequence, 73 residues long: MENKFFAAFFLLLVLFSSQEIIGGEGRTCQSKSHHFKYMCTSNHNCAIVCRNEGFSGGRCHGFHRRCYCTRLC.

A signal peptide spans 1 to 26 (MENKFFAAFFLLLVLFSSQEIIGGEG). 4 cysteine pairs are disulfide-bonded: C29/C73, C40/C60, C46/C67, and C50/C69.

The protein belongs to the DEFL family.

The protein resides in the secreted. Confers broad-spectrum resistance to pathogens. The chain is Defensin-like protein 6 (PDF2.5) from Arabidopsis thaliana (Mouse-ear cress).